Reading from the N-terminus, the 197-residue chain is Cell division protein SepF (197 aa).

2 disordered regions span residues 38–72 (MPTP…TTPT) and 164–197 (LSRE…AQAQ). A compositionally biased stretch (polar residues) spans 58–72 (TVASNFAMNSNTTPT). Positions 170–185 (PATPAAPARPAAPAPA) are enriched in low complexity.

The protein belongs to the SepF family. In terms of assembly, homodimer. Interacts with FtsZ.

The protein localises to the cytoplasm. Functionally, cell division protein that is part of the divisome complex and is recruited early to the Z-ring. Probably stimulates Z-ring formation, perhaps through the cross-linking of FtsZ protofilaments. Its function overlaps with FtsA. The protein is Cell division protein SepF of Picosynechococcus sp. (strain ATCC 27264 / PCC 7002 / PR-6) (Agmenellum quadruplicatum).